The chain runs to 239 residues: Pyridoxine 5'-phosphate synthase (239 aa).

Residue N7 participates in 3-amino-2-oxopropyl phosphate binding. 9 to 10 (DH) lines the 1-deoxy-D-xylulose 5-phosphate pocket. R18 contributes to the 3-amino-2-oxopropyl phosphate binding site. Catalysis depends on H43, which acts as the Proton acceptor. Residues R45 and H50 each contribute to the 1-deoxy-D-xylulose 5-phosphate site. The Proton acceptor role is filled by E70. T100 serves as a coordination point for 1-deoxy-D-xylulose 5-phosphate. H191 serves as the catalytic Proton donor. 3-amino-2-oxopropyl phosphate-binding positions include G192 and 213–214 (GH).

This sequence belongs to the PNP synthase family. In terms of assembly, homooctamer; tetramer of dimers.

Its subcellular location is the cytoplasm. The enzyme catalyses 3-amino-2-oxopropyl phosphate + 1-deoxy-D-xylulose 5-phosphate = pyridoxine 5'-phosphate + phosphate + 2 H2O + H(+). It participates in cofactor biosynthesis; pyridoxine 5'-phosphate biosynthesis; pyridoxine 5'-phosphate from D-erythrose 4-phosphate: step 5/5. Its function is as follows. Catalyzes the complicated ring closure reaction between the two acyclic compounds 1-deoxy-D-xylulose-5-phosphate (DXP) and 3-amino-2-oxopropyl phosphate (1-amino-acetone-3-phosphate or AAP) to form pyridoxine 5'-phosphate (PNP) and inorganic phosphate. This chain is Pyridoxine 5'-phosphate synthase, found in Gloeobacter violaceus (strain ATCC 29082 / PCC 7421).